A 278-amino-acid polypeptide reads, in one-letter code: WIMGHMVNEIYQIDEFVDLGANSIETDITFDDNAMAEYSFHGVPCDCRRYCHKWEYINTFLDGLRRATTPGDSKFRKELALVVFDLKTGDLSSSTANKGGKLFGQKLLQHYWKGGNNGGRAYIILSIPDLDHYAFISGFKEALKTAGHEELLAKVGYDFSGNDDLGSTRTALNKAGVKDRERVWQSDGITNCVSTLFRGLDRVKKAVSNRDSSNGYINKVYHWTVDKYGSVRDALDAGVDGVMTNDPDVIVNVLNESKYKGKLRLATYDDNPWETFKP.

The active site involves histidine 5. 2 residues coordinate Mg(2+): glutamate 25 and aspartate 27. Histidine 41 (nucleophile) is an active-site residue. 2 disulfides stabilise this stretch: cysteine 45–cysteine 51 and cysteine 47–cysteine 192. A Mg(2+)-binding site is contributed by aspartate 85.

This sequence belongs to the arthropod phospholipase D family. Class II subfamily. Mg(2+) serves as cofactor. Expressed by the venom gland.

It is found in the secreted. The enzyme catalyses an N-(acyl)-sphingosylphosphocholine = an N-(acyl)-sphingosyl-1,3-cyclic phosphate + choline. It carries out the reaction an N-(acyl)-sphingosylphosphoethanolamine = an N-(acyl)-sphingosyl-1,3-cyclic phosphate + ethanolamine. It catalyses the reaction a 1-acyl-sn-glycero-3-phosphocholine = a 1-acyl-sn-glycero-2,3-cyclic phosphate + choline. The catalysed reaction is a 1-acyl-sn-glycero-3-phosphoethanolamine = a 1-acyl-sn-glycero-2,3-cyclic phosphate + ethanolamine. Functionally, dermonecrotic toxins cleave the phosphodiester linkage between the phosphate and headgroup of certain phospholipids (sphingolipid and lysolipid substrates), forming an alcohol (often choline) and a cyclic phosphate. This toxin acts on sphingomyelin (SM). It may also act on ceramide phosphoethanolamine (CPE), lysophosphatidylcholine (LPC) and lysophosphatidylethanolamine (LPE), but not on lysophosphatidylserine (LPS), and lysophosphatidylglycerol (LPG). It acts by transphosphatidylation, releasing exclusively cyclic phosphate products as second products. Induces dermonecrosis, hemolysis, increased vascular permeability, edema, inflammatory response, and platelet aggregation. This is Dermonecrotic toxin LhSicTox-alphaIV1ii from Loxosceles hirsuta (Recluse spider).